A 590-amino-acid chain; its full sequence is Putative ABC transporter ATP-binding protein MM_3016 (590 aa).

ABC transporter domains lie at 11–251 (VRFE…KLGI) and 317–550 (VRIE…AGLI). ATP contacts are provided by residues 45-52 (GPSGCGKS) and 350-357 (GHNGAGKT).

This sequence belongs to the ABC transporter superfamily.

The protein resides in the cell membrane. Its function is as follows. Probably part of an ABC transporter complex. Responsible for energy coupling to the transport system. The sequence is that of Putative ABC transporter ATP-binding protein MM_3016 from Methanosarcina mazei (strain ATCC BAA-159 / DSM 3647 / Goe1 / Go1 / JCM 11833 / OCM 88) (Methanosarcina frisia).